A 432-amino-acid polypeptide reads, in one-letter code: Adenylosuccinate synthetase (432 aa).

GTP contacts are provided by residues Gly13–Lys19 and Gly41–Thr43. Asp14 (proton acceptor) is an active-site residue. Mg(2+) contacts are provided by Asp14 and Gly41. IMP is bound by residues Asp14–Lys17, Asn39–His42, Thr130, Arg144, Gln225, Thr240, and Arg304. The active-site Proton donor is the His42. Substrate is bound at residue Ala300–Arg306. GTP is bound by residues Arg306, Lys332–Asp334, and Ser415–Gly417.

Belongs to the adenylosuccinate synthetase family. Homodimer. Mg(2+) is required as a cofactor.

It localises to the cytoplasm. The catalysed reaction is IMP + L-aspartate + GTP = N(6)-(1,2-dicarboxyethyl)-AMP + GDP + phosphate + 2 H(+). It functions in the pathway purine metabolism; AMP biosynthesis via de novo pathway; AMP from IMP: step 1/2. In terms of biological role, plays an important role in the de novo pathway of purine nucleotide biosynthesis. Catalyzes the first committed step in the biosynthesis of AMP from IMP. This chain is Adenylosuccinate synthetase, found in Shigella flexneri serotype 5b (strain 8401).